The sequence spans 223 residues: Endonuclease V (223 aa).

Mg(2+)-binding residues include D35 and D103.

Belongs to the endonuclease V family. It depends on Mg(2+) as a cofactor.

It is found in the cytoplasm. It carries out the reaction Endonucleolytic cleavage at apurinic or apyrimidinic sites to products with a 5'-phosphate.. Functionally, DNA repair enzyme involved in the repair of deaminated bases. Selectively cleaves double-stranded DNA at the second phosphodiester bond 3' to a deoxyinosine leaving behind the intact lesion on the nicked DNA. The polypeptide is Endonuclease V (Salmonella schwarzengrund (strain CVM19633)).